The following is a 457-amino-acid chain: tRNA modification GTPase MnmE (457 aa).

The (6S)-5-formyl-5,6,7,8-tetrahydrofolate site is built by Arg-22, Glu-85, and Arg-124. The TrmE-type G domain maps to 219–378 (GATVVIAGKP…LKEKIYDLVL (160 aa)). Residue Asn-229 participates in K(+) binding. GTP is bound by residues 229–234 (NTGKSS), 248–254 (TPVPGTT), 273–276 (DTAG), and 333–336 (NKAD). Ser-233 contributes to the Mg(2+) binding site. Residues Thr-248, Val-250, and Thr-253 each contribute to the K(+) site. Thr-254 contributes to the Mg(2+) binding site. Lys-457 is a (6S)-5-formyl-5,6,7,8-tetrahydrofolate binding site.

The protein belongs to the TRAFAC class TrmE-Era-EngA-EngB-Septin-like GTPase superfamily. TrmE GTPase family. Homodimer. Heterotetramer of two MnmE and two MnmG subunits. The cofactor is K(+).

The protein localises to the cytoplasm. In terms of biological role, exhibits a very high intrinsic GTPase hydrolysis rate. Involved in the addition of a carboxymethylaminomethyl (cmnm) group at the wobble position (U34) of certain tRNAs, forming tRNA-cmnm(5)s(2)U34. The chain is tRNA modification GTPase MnmE from Syntrophus aciditrophicus (strain SB).